Consider the following 420-residue polypeptide: UPF0229 protein LPC_3097 (420 aa).

Residues 83–107 (IAGDRIKRPGGGAGGAGGNASDSGE) form a disordered region. A compositionally biased stretch (gly residues) spans 91-100 (PGGGAGGAGG).

It belongs to the UPF0229 family.

The protein is UPF0229 protein LPC_3097 of Legionella pneumophila (strain Corby).